The primary structure comprises 378 residues: MLNDTLALAQMLIARRSPTPFDNGCQEILIDRLEKMGFDIERIRCGEVDNLWARRGTEAPLICFAGHTDVVPTGPLEKWESSPFDPVTRNGRLYGRGAADMKGSIAAFITSIEAFVAEHPDHNGSIALLITSDEEGIAVDGTVRVVEVLKARNELIDYCIVGEPTSVDKLGDMIKNGRRGSLSGTLTVKGIQGHIAYPHLAKNPIHLAAPAIAELANTEWDEGNEYFPPTTWQISNINGGTGATNVIPGEVTVLFNFRFSTASTIESLKARVHGILDRHNLEYDLQWENSGKPYLTPRGDLVDAVNAAIHTVTGIEPELSTSGGTSDGRFIADICPQVVELGPRNATIHKINEYVEVSDLDQLPRIYQLTMESLLLRK.

Residue His-67 participates in Zn(2+) binding. Residue Asp-69 is part of the active site. Residue Asp-100 coordinates Zn(2+). Residue Glu-134 is the Proton acceptor of the active site. Zn(2+)-binding residues include Glu-135, Glu-163, and His-349.

It belongs to the peptidase M20A family. DapE subfamily. In terms of assembly, homodimer. Zn(2+) serves as cofactor. Requires Co(2+) as cofactor.

It catalyses the reaction N-succinyl-(2S,6S)-2,6-diaminopimelate + H2O = (2S,6S)-2,6-diaminopimelate + succinate. It participates in amino-acid biosynthesis; L-lysine biosynthesis via DAP pathway; LL-2,6-diaminopimelate from (S)-tetrahydrodipicolinate (succinylase route): step 3/3. Its function is as follows. Catalyzes the hydrolysis of N-succinyl-L,L-diaminopimelic acid (SDAP), forming succinate and LL-2,6-diaminopimelate (DAP), an intermediate involved in the bacterial biosynthesis of lysine and meso-diaminopimelic acid, an essential component of bacterial cell walls. This chain is Succinyl-diaminopimelate desuccinylase, found in Nitrosospira multiformis (strain ATCC 25196 / NCIMB 11849 / C 71).